Consider the following 199-residue polypeptide: Chaperone protein TorD (199 aa).

This sequence belongs to the TorD/DmsD family. TorD subfamily.

It is found in the cytoplasm. Functionally, involved in the biogenesis of TorA. Acts on TorA before the insertion of the molybdenum cofactor and, as a result, probably favors a conformation of the apoenzyme that is competent for acquiring the cofactor. The chain is Chaperone protein TorD from Escherichia coli (strain K12 / MC4100 / BW2952).